A 330-amino-acid chain; its full sequence is Succinylglutamate desuccinylase (330 aa).

The Zn(2+) site is built by His53, Glu56, and His147. Glu210 is an active-site residue.

Belongs to the AspA/AstE family. Succinylglutamate desuccinylase subfamily. It depends on Zn(2+) as a cofactor.

The catalysed reaction is N-succinyl-L-glutamate + H2O = L-glutamate + succinate. Its pathway is amino-acid degradation; L-arginine degradation via AST pathway; L-glutamate and succinate from L-arginine: step 5/5. Functionally, transforms N(2)-succinylglutamate into succinate and glutamate. This Yersinia pseudotuberculosis serotype O:1b (strain IP 31758) protein is Succinylglutamate desuccinylase.